We begin with the raw amino-acid sequence, 519 residues long: Probable WRKY transcription factor 33 (519 aa).

Disordered regions lie at residues 1-34 and 123-212; these read MAAS…STSS and SSGV…CTFP. Residues 7–34 are compositionally biased toward polar residues; that stretch reads TMDNSRTRQNMNGSANWSQQSGRTSTSS. The segment covering 130-142 has biased composition (low complexity); that stretch reads TTTTTTTTTTTTT. The span at 164-174 shows a compositional bias: polar residues; that stretch reads TETRPNNQAVS. Residues 178 to 188 show a composition bias toward basic and acidic residues; it reads REQRKGEDGYN. The WRKY 1 DNA-binding region spans 178–242; sequence REQRKGEDGY…YKGSHNHPKP (65 aa). Positions 209, 214, 237, and 239 each coordinate Zn(2+). 2 disordered regions span residues 232–255 and 267–349; these read VYKG…SSTF and NRQA…REPR. Low complexity predominate over residues 245–254; sequence TRRSSSSSST. Residues 269–299 show a composition bias toward polar residues; sequence QASSDQPNSNNSFHQSDSFGMQQEDNTTSDS. The span at 323–332 shows a compositional bias: basic and acidic residues; the sequence is PEAKRWKGDN. Positions 356-421 form a DNA-binding region, WRKY 2; that stretch reads SDIDILDDGY…YEGKHNHDVP (66 aa). Zn(2+) is bound by residues Cys-387, Cys-392, His-416, and His-418.

It belongs to the WRKY group I family. In terms of assembly, interacts with MKS1. Interacts with ATG18A. Interacts with SIB1 and SIB2. Interacts with VQ1 and VQ10. In terms of processing, phosphorylated by MPK4. Phosphorylated on serine residues by MPK3 and MPK6 following infection with the necrotrophic fungal pathogen B.cinerea. As to expression, highly expressed in roots, leaves and flowers, and at lower levels in stems, siliques and seeds.

It localises to the nucleus. Its function is as follows. Transcription factor. Interacts specifically with the W box (5'-TTGAC[CT]-3'), a frequently occurring elicitor-responsive cis-acting element. Involved in defense responses. Required for resistance to the necrotrophic fungal pathogen B.cinerea. Regulates the antagonistic relationship between defense pathways mediating responses to the bacterial pathogen P. syringae and the necrotrophic pathogen B.cinerea. Required for the phytoalexin camalexin synthesis following infection with B.cinerea. Acts as a positive regulator of the camalexin biosynthetic genes PAD3 (CYP71B15) and CYP71A13 by binding to their promoters. Acts downstream of MPK3 and MPK6 in reprogramming the expression of camalexin biosynthetic genes, which drives the metabolic flow to camalexin production. Functions with WRKY25 as positive regulator of salt stress response and abscisic acid (ABA) signaling. Functions with WRKY25 and WRKY26 as positive regulator of plant thermotolerance by partially participating in ethylene-response signal transduction pathway. The DNA-binding activity of WRKY33 is increased by SIB1 and SIB2. In Arabidopsis thaliana (Mouse-ear cress), this protein is Probable WRKY transcription factor 33 (WRKY33).